The sequence spans 350 residues: Methylthioribose-1-phosphate isomerase (350 aa).

Residues 47-49 (RGA), arginine 89, and glutamine 196 contribute to the substrate site. The active-site Proton donor is the aspartate 237. Residue 247–248 (NK) coordinates substrate.

The protein belongs to the eIF-2B alpha/beta/delta subunits family. MtnA subfamily.

The catalysed reaction is 5-(methylsulfanyl)-alpha-D-ribose 1-phosphate = 5-(methylsulfanyl)-D-ribulose 1-phosphate. It functions in the pathway amino-acid biosynthesis; L-methionine biosynthesis via salvage pathway; L-methionine from S-methyl-5-thio-alpha-D-ribose 1-phosphate: step 1/6. In terms of biological role, catalyzes the interconversion of methylthioribose-1-phosphate (MTR-1-P) into methylthioribulose-1-phosphate (MTRu-1-P). In Nitratidesulfovibrio vulgaris (strain DSM 19637 / Miyazaki F) (Desulfovibrio vulgaris), this protein is Methylthioribose-1-phosphate isomerase.